The primary structure comprises 206 residues: MARYLGPKLKLSRREGTDLFLKSGVRAIDTKCKIDNAPGVHGARRGRLSEYGVQLREKQKVRRMYGVLEKQFRNYYKDAARLKGNTGENLLQLLEGRLDNVVYRMGFGATRAESRQLVSHKSILVNGKVVNVPSFKVAANDVVSIREKAKQQSRIKAALEVAEQREKPTWIEVDAGKMEGTFKRLPERSDLSADINEHLIVELYSK.

An S4 RNA-binding domain is found at 96 to 158; it reads GRLDNVVYRM…AKQQSRIKAA (63 aa).

This sequence belongs to the universal ribosomal protein uS4 family. In terms of assembly, part of the 30S ribosomal subunit. Contacts protein S5. The interaction surface between S4 and S5 is involved in control of translational fidelity.

One of the primary rRNA binding proteins, it binds directly to 16S rRNA where it nucleates assembly of the body of the 30S subunit. Its function is as follows. With S5 and S12 plays an important role in translational accuracy. The polypeptide is Small ribosomal subunit protein uS4 (Aliivibrio fischeri (strain ATCC 700601 / ES114) (Vibrio fischeri)).